The sequence spans 411 residues: L-cysteine:1D-myo-inositol 2-amino-2-deoxy-alpha-D-glucopyranoside ligase (411 aa).

Position 43 (C43) interacts with Zn(2+). Residues 43–46 (CGIT), T58, and 81–83 (NVT) each bind L-cysteinyl-5'-AMP. The 'HIGH' region signature appears at 45–55 (ITPYDATHLGH). The 'ERGGDP' region signature appears at 186–191 (QRGGDP). W226 is a binding site for L-cysteinyl-5'-AMP. C230 provides a ligand contact to Zn(2+). 248–250 (GSD) provides a ligand contact to L-cysteinyl-5'-AMP. Residue H255 participates in Zn(2+) binding. Residue I282 participates in L-cysteinyl-5'-AMP binding. Residues 288 to 292 (KMSKS) carry the 'KMSKS' region motif.

It belongs to the class-I aminoacyl-tRNA synthetase family. MshC subfamily. As to quaternary structure, monomer. Requires Zn(2+) as cofactor.

The catalysed reaction is 1D-myo-inositol 2-amino-2-deoxy-alpha-D-glucopyranoside + L-cysteine + ATP = 1D-myo-inositol 2-(L-cysteinylamino)-2-deoxy-alpha-D-glucopyranoside + AMP + diphosphate + H(+). Functionally, catalyzes the ATP-dependent condensation of GlcN-Ins and L-cysteine to form L-Cys-GlcN-Ins. This Mycobacterium ulcerans (strain Agy99) protein is L-cysteine:1D-myo-inositol 2-amino-2-deoxy-alpha-D-glucopyranoside ligase.